Consider the following 73-residue polypeptide: UPF0346 protein SSP1318 (73 aa).

The protein belongs to the UPF0346 family.

The sequence is that of UPF0346 protein SSP1318 from Staphylococcus saprophyticus subsp. saprophyticus (strain ATCC 15305 / DSM 20229 / NCIMB 8711 / NCTC 7292 / S-41).